Reading from the N-terminus, the 410-residue chain is Zinc finger TRAF-type-containing protein 1 (410 aa).

Gly residues predominate over residues 1 to 13 (MSGAEEAGGGGPA). Residues 1 to 22 (MSGAEEAGGGGPAAGPAGSVPA) form a disordered region. The RING-type; degenerate zinc-finger motif lies at 117 to 162 (CTVCLDLPKASVYQCTNGHLMCAGCFIHLLADARLKEEQATCPNCR). The TRAF-type zinc-finger motif lies at 158-231 (CPNCRCEISK…PWHGPFHELT (74 aa)).

The protein belongs to the ZFTRAF1 family. In terms of assembly, interacts with LGALS3.

The protein localises to the cytoplasm. The protein resides in the perinuclear region. The polypeptide is Zinc finger TRAF-type-containing protein 1 (Bos taurus (Bovine)).